The following is a 356-amino-acid chain: Ferredoxin--NADP reductase (356 aa).

T25, E44, Q52, Y57, V97, F132, D298, and S339 together coordinate FAD.

Belongs to the ferredoxin--NADP reductase type 2 family. As to quaternary structure, homodimer. The cofactor is FAD.

It carries out the reaction 2 reduced [2Fe-2S]-[ferredoxin] + NADP(+) + H(+) = 2 oxidized [2Fe-2S]-[ferredoxin] + NADPH. This Chlorobaculum parvum (strain DSM 263 / NCIMB 8327) (Chlorobium vibrioforme subsp. thiosulfatophilum) protein is Ferredoxin--NADP reductase.